A 344-amino-acid chain; its full sequence is 2,3,4,5-tetrahydropyridine-2,6-dicarboxylate N-succinyltransferase (344 aa).

A Mg(2+)-binding site is contributed by Glu-205. Glu-221 acts as the Acyl-anhydride intermediate in catalysis. Succinyl-CoA-binding positions include Arg-223, Gly-238, Ser-241, Ala-264, 279–280 (EA), Gly-287, Lys-304, and 317–320 (RRNS).

The protein belongs to the type 2 tetrahydrodipicolinate N-succinyltransferase family. In terms of assembly, homotrimer.

The protein resides in the cytoplasm. It carries out the reaction (S)-2,3,4,5-tetrahydrodipicolinate + succinyl-CoA + H2O = (S)-2-succinylamino-6-oxoheptanedioate + CoA. It functions in the pathway amino-acid biosynthesis; L-lysine biosynthesis via DAP pathway; LL-2,6-diaminopimelate from (S)-tetrahydrodipicolinate (succinylase route): step 1/3. Catalyzes the conversion of the cyclic tetrahydrodipicolinate (THDP) into the acyclic N-succinyl-L-2-amino-6-oxopimelate using succinyl-CoA. The protein is 2,3,4,5-tetrahydropyridine-2,6-dicarboxylate N-succinyltransferase of Pseudomonas paraeruginosa (strain DSM 24068 / PA7) (Pseudomonas aeruginosa (strain PA7)).